The chain runs to 79 residues: CDC42 small effector protein 1 (79 aa).

2 S-palmitoyl cysteine lipidation sites follow: Cys-10 and Cys-11. Residues 30–43 form the CRIB domain; that stretch reads IGEPMNFVHLTHIG. Positions 41 to 79 are disordered; the sequence is HIGSGDMGASDGLPRAGGVQEQMRSKCGRDRQWSNSGVL. The span at 63–72 shows a compositional bias: basic and acidic residues; the sequence is MRSKCGRDRQ.

The protein belongs to the CDC42SE/SPEC family.

The protein localises to the cytoplasm. Its subcellular location is the cytoskeleton. It localises to the cell membrane. Functionally, probably involved in the organization of the actin cytoskeleton by acting downstream of CDC42, inducing actin filament assembly. This is CDC42 small effector protein 1 (cdc42se1) from Xenopus tropicalis (Western clawed frog).